The sequence spans 336 residues: 3-isopropylmalate dehydrogenase (336 aa).

Substrate contacts are provided by R87, R97, R121, and D211. Positions 211, 235, and 239 each coordinate Mg(2+). 271–283 (GSAPDIAGQGIAD) contacts NAD(+).

It belongs to the isocitrate and isopropylmalate dehydrogenases family. LeuB type 2 subfamily. As to quaternary structure, homodimer. It depends on Mg(2+) as a cofactor. Requires Mn(2+) as cofactor.

The protein localises to the cytoplasm. It carries out the reaction (2R,3S)-3-isopropylmalate + NAD(+) = 4-methyl-2-oxopentanoate + CO2 + NADH. The protein operates within amino-acid biosynthesis; L-leucine biosynthesis; L-leucine from 3-methyl-2-oxobutanoate: step 3/4. Its function is as follows. Catalyzes the oxidation of 3-carboxy-2-hydroxy-4-methylpentanoate (3-isopropylmalate) to 3-carboxy-4-methyl-2-oxopentanoate. The product decarboxylates to 4-methyl-2 oxopentanoate. This is 3-isopropylmalate dehydrogenase from Mycobacterium leprae (strain Br4923).